The primary structure comprises 239 residues: Ribosomal RNA small subunit methyltransferase G (239 aa).

Residues glycine 77, phenylalanine 82, 128 to 129 (AE), and arginine 146 contribute to the S-adenosyl-L-methionine site. The segment at 214–239 (IDKKRQTPKKYPRKPGTPNKTPLLEK) is disordered.

Belongs to the methyltransferase superfamily. RNA methyltransferase RsmG family.

Its subcellular location is the cytoplasm. Specifically methylates the N7 position of guanine in position 535 of 16S rRNA. This Staphylococcus aureus (strain Mu3 / ATCC 700698) protein is Ribosomal RNA small subunit methyltransferase G.